A 507-amino-acid chain; its full sequence is ATP synthase subunit alpha, chloroplastic (507 aa).

170–177 contributes to the ATP binding site; it reads GDRQTGKT.

It belongs to the ATPase alpha/beta chains family. As to quaternary structure, F-type ATPases have 2 components, CF(1) - the catalytic core - and CF(0) - the membrane proton channel. CF(1) has five subunits: alpha(3), beta(3), gamma(1), delta(1), epsilon(1). CF(0) has four main subunits: a, b, b' and c.

The protein localises to the plastid. It localises to the chloroplast thylakoid membrane. The enzyme catalyses ATP + H2O + 4 H(+)(in) = ADP + phosphate + 5 H(+)(out). Produces ATP from ADP in the presence of a proton gradient across the membrane. The alpha chain is a regulatory subunit. This Tetradesmus obliquus (Green alga) protein is ATP synthase subunit alpha, chloroplastic.